The primary structure comprises 2260 residues: Reducing polyketide synthase pksF (2260 aa).

Residues 20 to 445 (VEPIAIVGFG…GTNAHVVLDD (426 aa)) enclose the Ketosynthase family 3 (KS3) domain. Residues cysteine 194, histidine 329, and histidine 368 each act as for beta-ketoacyl synthase activity in the active site. The segment at 598–933 (FVFTGQGAQW…ECAGKLHTIG (336 aa)) is malonyl-CoA:ACP transacylase (MAT) domain. Serine 689 acts as the For malonyltransferase activity in catalysis. Residues 984–1121 (HELLGSRTPD…GYVAIEYDDR (138 aa)) are N-terminal hotdog fold. Residues 984–1281 (HELLGSRTPD…FRNKLFSITA (298 aa)) are dehydratase (DH) domain. Residues 984 to 1306 (HELLGSRTPD…TSTIGRNSPS (323 aa)) form the PKS/mFAS DH domain. Residue histidine 1016 is the Proton acceptor; for dehydratase activity of the active site. Residues 1150–1306 (RIAIDSADIY…TSTIGRNSPS (157 aa)) form a C-terminal hotdog fold region. The active-site Proton donor; for dehydratase activity is the aspartate 1216. The tract at residues 1544 to 1859 (GILKTLHYEQ…DVDVVEKIVI (316 aa)) is enoylreductase (ER) domain. The ketoreductase (KR) domain stretch occupies residues 1882–2104 (PDASYLIAGA…LRFCCDPDRV (223 aa)). Residues 2174 to 2251 (QATDIVVEAI…LLAVKVAGKS (78 aa)) enclose the Carrier domain. An O-(pantetheine 4'-phosphoryl)serine modification is found at serine 2211.

It depends on pantetheine 4'-phosphate as a cofactor.

Its function is as follows. Reducing polyketide synthase that catalyzes the formation of a C22 intermediate attached to the ACP. Release by intramolecular hydrolysis by the enolized delta-carbonyl would give the pyrone product aslanipyrone. Alternatively, KR-mediated reduction of the beta-carbonyl of the C22 intermediate would form a beta-hydroxy thioester intermediate, which could be a substrate for a further KS-mediated condensation of an additional C2 unit to form a C24 intermediate, which cyclizes by aldol condensation followed by decarboxylation to form aslaniol. Neither aslanipyrone, aslaniol, nor their derivatives have been detected in A.solani, probably due to a low abundance and/or extensive post-PKS modification. It is assumed that the branching point from C22 to C24 is the result of KR activity on the C22 intermediate anchored to the ACP. The protein is Reducing polyketide synthase pksF of Alternaria solani.